Here is a 654-residue protein sequence, read N- to C-terminus: Endoplasmic reticulum chaperone BiP (654 aa).

The N-terminal stretch at 1–18 (MKLSLVAAMLLLLSAARA) is a signal peptide. The required for interaction with ELAPOR1 stretch occupies residues 1–80 (MKLSLVAAML…EGERLIGDAA (80 aa)). 36-39 (GTTY) contributes to the ATP binding site. A Phosphoserine modification is found at Ser86. Lys96 is a binding site for ATP. At Lys125 the chain carries N6-acetyllysine. The tract at residues 125-280 (KPYIQVDIGG…KKKTGKDVRK (156 aa)) is nucleotide-binding (NBD). Tyr160 is subject to 3'-nitrotyrosine. Lys213 is modified (N6-acetyllysine). 227–229 (GGT) contacts ATP. Lys271 carries the N6-acetyllysine modification. An ATP-binding site is contributed by 293-300 (EKAKRALS). Residue Lys326 is modified to N6-acetyllysine. Residue Lys352 forms a Glycyl lysine isopeptide (Lys-Gly) (interchain with G-Cter in SUMO2) linkage. Lys353 carries the post-translational modification N6-acetyllysine; alternate. A Glycyl lysine isopeptide (Lys-Gly) (interchain with G-Cter in SUMO1); alternate cross-link involves residue Lys353. 364–367 (GSTR) provides a ligand contact to ATP. The tract at residues 409-419 (QDTGDLALLDV) is interdomain linker. Positions 420 to 500 (CPLTLGIETV…PRGVPQIEVT (81 aa)) are substrate-binding (SBD). Lys447 bears the N6-succinyllysine mark. Position 492 is an omega-N-methylarginine (Arg492). Thr518 carries the post-translational modification O-AMP-threonine; alternate. Thr518 bears the Phosphothreonine; alternate mark. An N6,N6,N6-trimethyllysine; by METTL21A; in vitro modification is found at Lys585. An N6,N6-dimethyllysine; alternate modification is found at Lys585. Lys585 is subject to N6-methyllysine; alternate. Lys591 carries the N6-methyllysine modification. The tract at residues 633–654 (KLYGSAGPPPTGEEDTAEKDEL) is disordered. Residues Thr643 and Thr648 each carry the phosphothreonine modification. Residues 644–654 (GEEDTAEKDEL) are compositionally biased toward acidic residues. The Prevents secretion from ER motif lies at 651 to 654 (KDEL).

Belongs to the heat shock protein 70 family. Monomer and homooligomer; homooligomerization via the interdomain linker inactivates the chaperone activity and acts as a storage of HSPA5/BiP molecules. Interacts with DNAJC1 (via J domain). Component of an EIF2 complex at least composed of CELF1/CUGBP1, CALR, CALR3, EIF2S1, EIF2S2, HSP90B1 and HSPA5. Part of a large chaperone multiprotein complex comprising DNAJB11, HSP90B1, HSPA5, HYOU, PDIA2, PDIA4, PDIA6, PPIB, SDF2L1, UGGT1 and very small amounts of ERP29, but not, or at very low levels, CALR nor CANX. Interacts with TMEM132A and TRIM21. May form a complex with ERLEC1, OS9, SEL1L and SYVN1. Interacts with DNAJC10. Interacts with DNAJB9/ERdj4; leading to recruit HSPA5/BiP to ERN1/IRE1. Interacts with ERN1/IRE1 (via luminal domain); the interaction takes place following interaction with DNAJB9/ERdj4 and leads to inactivate ERN1/IRE1, the interaction also competitively inhibits ERN1 interaction with MANF. Interacts directly with MANF (via SAP domain); the interaction inhibits ATP binding to HSPA5/BiP and subsequent nucleotide exchange. Interacts with EIF2AK3/PERK (via luminal domain); interaction leads to inactivate EIF2AK3/PERK. Interacts with MX1. Interacts with METTL23. Interacts with CEMIP; the interaction induces calcium leakage from the endoplasmic reticulum and cell migration. Interacts with PCSK4 form; the interaction takes place in the endoplasmic reticulum. Interacts with CIPC. Interacts with CCDC88B (via C-terminus); the interaction opposes ERN1-mediated JNK activation, protecting against apoptosis. Interacts with INPP5K; necessary for INPP5K localization at the endoplasmic reticulum. Interacts with MANF; the interaction is direct. Interacts with LOXL2; leading to activate the ERN1/IRE1-XBP1 pathway of the unfolded protein response. Interacts with CLU under stressed condition; interaction increases CLU protein stability; facilitates its retrotranslocation and redistribution to the mitochondria; cooperatively suppress stress-induced apoptosis by stabilizing mitochondrial membrane integrity. Interacts with CCDC47. Interacts with CLN3. Interacts with ELAPOR1; may regulate the function of HSPA5 in apoptosis and cell proliferation. Interacts with CASP7. Interacts with ILDR2; the interaction stabilizes ILDR2 expression. Interacts with ADAM7. In terms of processing, in unstressed cells, AMPylation at Thr-518 by FICD inactivates the chaperome activity: AMPylated form is locked in a relatively inert state and only weakly stimulated by J domain-containing proteins. In response to endoplasmic reticulum stress, de-AMPylation by the same protein, FICD, restores the chaperone activity.

It is found in the endoplasmic reticulum lumen. Its subcellular location is the melanosome. It localises to the cytoplasm. The protein resides in the cell surface. The enzyme catalyses ATP + H2O = ADP + phosphate + H(+). With respect to regulation, the chaperone activity is regulated by ATP-induced allosteric coupling of the nucleotide-binding (NBD) and substrate-binding (SBD) domains. In the ADP-bound and nucleotide-free (apo) states, the two domains have little interaction. In contrast, in the ATP-bound state the two domains are tightly coupled, which results in drastically accelerated kinetics in both binding and release of polypeptide substrates. J domain-containing co-chaperones (DNAJB9/ERdj4 or DNAJC10/ERdj5) stimulate the ATPase activity and are required for efficient substrate recognition by HSPA5/BiP. Homooligomerization inactivates participating HSPA5/BiP protomers and probably act as reservoirs to store HSPA5/BiP molecules when they are not needed by the cell. In terms of biological role, endoplasmic reticulum chaperone that plays a key role in protein folding and quality control in the endoplasmic reticulum lumen. Involved in the correct folding of proteins and degradation of misfolded proteins via its interaction with DNAJC10/ERdj5, probably to facilitate the release of DNAJC10/ERdj5 from its substrate. Acts as a key repressor of the EIF2AK3/PERK and ERN1/IRE1-mediated unfolded protein response (UPR). In the unstressed endoplasmic reticulum, recruited by DNAJB9/ERdj4 to the luminal region of ERN1/IRE1, leading to disrupt the dimerization of ERN1/IRE1, thereby inactivating ERN1/IRE1. Also binds and inactivates EIF2AK3/PERK in unstressed cells. Accumulation of misfolded protein in the endoplasmic reticulum causes release of HSPA5/BiP from ERN1/IRE1 and EIF2AK3/PERK, allowing their homodimerization and subsequent activation. Plays an auxiliary role in post-translational transport of small presecretory proteins across endoplasmic reticulum (ER). May function as an allosteric modulator for SEC61 channel-forming translocon complex, likely cooperating with SEC62 to enable the productive insertion of these precursors into SEC61 channel. Appears to specifically regulate translocation of precursors having inhibitory residues in their mature region that weaken channel gating. May also play a role in apoptosis and cell proliferation. This is Endoplasmic reticulum chaperone BiP from Pongo abelii (Sumatran orangutan).